Here is a 483-residue protein sequence, read N- to C-terminus: Triacylglycerol lipase ptl3 (483 aa).

Positions 141-340 (LILSGGGTFG…DNDIPHAKLT (200 aa)) constitute a PNPLA domain. Residues 145-150 (GGGTFG) carry the GXGXXG motif. The GXSXG signature appears at 172–176 (GSSAG). Ser-174 functions as the Nucleophile in the catalytic mechanism. The active-site Proton acceptor is Asp-327.

The protein localises to the cytoplasm. Its subcellular location is the lipid droplet. It carries out the reaction a triacylglycerol + H2O = a diacylglycerol + a fatty acid + H(+). In terms of biological role, lipid particle-localized triacylglycerol (TAG) lipase. The lipid droplet/particle is a lipid storage compartment which serves as a depot of energy and building blocks for membrane lipid biosynthesis. Involved in the mobilization of the non-polar storage lipids triacylglycerols (TAGs) from lipid particles by hydrolysis of TAGs, releasing and supplying specific fatty acids to the appropriate metabolic pathways. This chain is Triacylglycerol lipase ptl3 (ptl3), found in Schizosaccharomyces pombe (strain 972 / ATCC 24843) (Fission yeast).